We begin with the raw amino-acid sequence, 886 residues long: Methanogenesis regulatory histidine kinase FilI (886 aa).

A run of 2 helical transmembrane segments spans residues isoleucine 7–cysteine 27 and valine 270–leucine 290. One can recognise an HAMP domain in the interval leucine 290–glutamine 344. The PAS domain occupies serine 349–glutamate 419. The region spanning phenylalanine 421–lysine 473 is the PAC domain. In terms of domain architecture, Histidine kinase spans threonine 674–proline 886. Position 677 is a phosphohistidine; by autocatalysis (histidine 677).

Autophosphorylated.

The protein localises to the cell membrane. The catalysed reaction is ATP + protein L-histidine = ADP + protein N-phospho-L-histidine.. Member of the two-component regulatory system FilI/FilRs, which is involved in the regulation of methanogenesis. Autophosphorylates and specifically transfers the phosphoryl group to both FilR1 and FilR2. Functionally, could also catalyze the synthesis of the quorum sensing (QS) signal molecules carboxyl-acyl homoserine lactones (AHLs), which regulate the transition of the cellular morphology from short cells to filaments and of the carbon metabolic flux from biomass formation to methane production. This chain is Methanogenesis regulatory histidine kinase FilI, found in Methanothrix harundinacea (strain 6Ac) (Methanosaeta harundinacea).